The primary structure comprises 216 residues: Glycerol-3-phosphate acyltransferase (216 aa).

5 consecutive transmembrane segments (helical) span residues 4-24 (IALGMIIFAYLCGSISSAILV), 56-76 (VAVLLFDILKGMLPVWIAYLL), 80-100 (PLYLGLTAIAACLGHIYPVFF), 112-132 (FGAIAPIGWDLTGLMTGTWLL), and 138-158 (GYSSLGAIVSALIAPFYVWWF).

The protein belongs to the PlsY family. As to quaternary structure, probably interacts with PlsX.

Its subcellular location is the cell inner membrane. The catalysed reaction is an acyl phosphate + sn-glycerol 3-phosphate = a 1-acyl-sn-glycero-3-phosphate + phosphate. The protein operates within lipid metabolism; phospholipid metabolism. Catalyzes the transfer of an acyl group from acyl-phosphate (acyl-PO(4)) to glycerol-3-phosphate (G3P) to form lysophosphatidic acid (LPA). This enzyme utilizes acyl-phosphate as fatty acyl donor, but not acyl-CoA or acyl-ACP. The protein is Glycerol-3-phosphate acyltransferase of Yersinia pseudotuberculosis serotype O:1b (strain IP 31758).